A 292-amino-acid chain; its full sequence is Nucleotide-binding protein azo0399 (292 aa).

An ATP-binding site is contributed by 8–15 (GLSGSGKS). Residue 57 to 60 (DMRS) participates in GTP binding.

It belongs to the RapZ-like family.

Its function is as follows. Displays ATPase and GTPase activities. This Azoarcus sp. (strain BH72) protein is Nucleotide-binding protein azo0399.